Reading from the N-terminus, the 557-residue chain is Dihydroxy-acid dehydratase (557 aa).

Aspartate 78 provides a ligand contact to Mg(2+). Cysteine 119 is a [2Fe-2S] cluster binding site. Aspartate 120 and lysine 121 together coordinate Mg(2+). Lysine 121 carries the post-translational modification N6-carboxylysine. Cysteine 192 serves as a coordination point for [2Fe-2S] cluster. Glutamate 446 lines the Mg(2+) pocket. Serine 472 acts as the Proton acceptor in catalysis.

Belongs to the IlvD/Edd family. Homodimer. The cofactor is [2Fe-2S] cluster. Requires Mg(2+) as cofactor.

The enzyme catalyses (2R)-2,3-dihydroxy-3-methylbutanoate = 3-methyl-2-oxobutanoate + H2O. The catalysed reaction is (2R,3R)-2,3-dihydroxy-3-methylpentanoate = (S)-3-methyl-2-oxopentanoate + H2O. Its pathway is amino-acid biosynthesis; L-isoleucine biosynthesis; L-isoleucine from 2-oxobutanoate: step 3/4. The protein operates within amino-acid biosynthesis; L-valine biosynthesis; L-valine from pyruvate: step 3/4. Functionally, functions in the biosynthesis of branched-chain amino acids. Catalyzes the dehydration of (2R,3R)-2,3-dihydroxy-3-methylpentanoate (2,3-dihydroxy-3-methylvalerate) into 2-oxo-3-methylpentanoate (2-oxo-3-methylvalerate) and of (2R)-2,3-dihydroxy-3-methylbutanoate (2,3-dihydroxyisovalerate) into 2-oxo-3-methylbutanoate (2-oxoisovalerate), the penultimate precursor to L-isoleucine and L-valine, respectively. The protein is Dihydroxy-acid dehydratase of Campylobacter curvus (strain 525.92).